Consider the following 743-residue polypeptide: NAD(P)H-quinone oxidoreductase subunit 5, chloroplastic (743 aa).

16 helical membrane-spanning segments follow: residues 9–29, 40–60, 89–109, 125–145, 147–167, 185–205, 219–239, 258–278, 280–300, 327–347, 354–374, 396–416, 425–445, 546–566, 607–627, and 721–741; these read WIIP…LLFF, WAFI…DLSI, IDPL…LVLI, FAYM…SNFI, IYIF…FWFT, GDFG…SFEF, NEVN…GPVA, TPIS…FLVA, LLPL…IGII, LGYM…FHLI, ALLF…VGYF, TAFL…CFWS, WLYS…TAFY, ILFV…IGIP, LSVS…KPFY, and FYLL…FFFF.

This sequence belongs to the complex I subunit 5 family. In terms of assembly, NDH is composed of at least 16 different subunits, 5 of which are encoded in the nucleus.

The protein resides in the plastid. The protein localises to the chloroplast thylakoid membrane. The catalysed reaction is a plastoquinone + NADH + (n+1) H(+)(in) = a plastoquinol + NAD(+) + n H(+)(out). It carries out the reaction a plastoquinone + NADPH + (n+1) H(+)(in) = a plastoquinol + NADP(+) + n H(+)(out). In terms of biological role, NDH shuttles electrons from NAD(P)H:plastoquinone, via FMN and iron-sulfur (Fe-S) centers, to quinones in the photosynthetic chain and possibly in a chloroplast respiratory chain. The immediate electron acceptor for the enzyme in this species is believed to be plastoquinone. Couples the redox reaction to proton translocation, and thus conserves the redox energy in a proton gradient. The sequence is that of NAD(P)H-quinone oxidoreductase subunit 5, chloroplastic (ndhF) from Citrus sinensis (Sweet orange).